A 418-amino-acid chain; its full sequence is Staphyloferrin B transporter (418 aa).

10 helical membrane-spanning segments follow: residues 19 to 39 (FIAI…MASL), 49 to 69 (LWSG…SPIW), 88 to 108 (GLAV…FVLV), 163 to 183 (ILGF…VCIF), 222 to 242 (FIIV…ALSP), 257 to 277 (VIGF…PLWG), 287 to 307 (SVYI…GLAT), 317 to 337 (ILQG…VVNA), 353 to 373 (MLVV…SYTT), and 377 to 397 (TFIV…CSTI).

Belongs to the major facilitator superfamily.

It is found in the cell membrane. In terms of biological role, involved in staphyloferrin B secretion. This chain is Staphyloferrin B transporter, found in Staphylococcus aureus (strain NCTC 8325 / PS 47).